A 372-amino-acid chain; its full sequence is tRNA-specific 2-thiouridylase MnmA (372 aa).

Residues 16-23 (GMSGGVDS) and methionine 42 each bind ATP. The tract at residues 102–104 (NPD) is interaction with target base in tRNA. Residue cysteine 107 is the Nucleophile of the active site. Cysteines 107 and 205 form a disulfide. Glycine 132 contributes to the ATP binding site. The interval 155–157 (KDQ) is interaction with tRNA. The Cysteine persulfide intermediate role is filled by cysteine 205. The tract at residues 317-318 (RY) is interaction with tRNA.

Belongs to the MnmA/TRMU family.

The protein resides in the cytoplasm. It carries out the reaction S-sulfanyl-L-cysteinyl-[protein] + uridine(34) in tRNA + AH2 + ATP = 2-thiouridine(34) in tRNA + L-cysteinyl-[protein] + A + AMP + diphosphate + H(+). In terms of biological role, catalyzes the 2-thiolation of uridine at the wobble position (U34) of tRNA, leading to the formation of s(2)U34. This Shewanella baltica (strain OS185) protein is tRNA-specific 2-thiouridylase MnmA.